A 480-amino-acid chain; its full sequence is Adenosylhomocysteinase (480 aa).

Thr63, Asp142, and Glu203 together coordinate substrate. 204-206 is an NAD(+) binding site; the sequence is TTT. Substrate is bound by residues Lys233 and Asp237. NAD(+) is bound by residues Asn238, 267-272, Glu290, Asn325, 346-348, and Asn394; these read GYGDVG and IGH.

It belongs to the adenosylhomocysteinase family. The cofactor is NAD(+).

Its subcellular location is the cytoplasm. The catalysed reaction is S-adenosyl-L-homocysteine + H2O = L-homocysteine + adenosine. The protein operates within amino-acid biosynthesis; L-homocysteine biosynthesis; L-homocysteine from S-adenosyl-L-homocysteine: step 1/1. Its function is as follows. May play a key role in the regulation of the intracellular concentration of adenosylhomocysteine. This Xanthomonas euvesicatoria pv. vesicatoria (strain 85-10) (Xanthomonas campestris pv. vesicatoria) protein is Adenosylhomocysteinase.